Here is a 261-residue protein sequence, read N- to C-terminus: NAD kinase (261 aa).

The active-site Proton acceptor is the Asp54. NAD(+)-binding positions include 54–55, 123–124, Arg150, Asp152, and 163–168; these read DG, ND, and TAYSLS.

Belongs to the NAD kinase family. Requires a divalent metal cation as cofactor.

The protein localises to the cytoplasm. It catalyses the reaction NAD(+) + ATP = ADP + NADP(+) + H(+). In terms of biological role, involved in the regulation of the intracellular balance of NAD and NADP, and is a key enzyme in the biosynthesis of NADP. Catalyzes specifically the phosphorylation on 2'-hydroxyl of the adenosine moiety of NAD to yield NADP. In Caldicellulosiruptor bescii (strain ATCC BAA-1888 / DSM 6725 / KCTC 15123 / Z-1320) (Anaerocellum thermophilum), this protein is NAD kinase.